A 375-amino-acid chain; its full sequence is 23S rRNA (uracil(747)-C(5))-methyltransferase RlmC (375 aa).

The [4Fe-4S] cluster site is built by cysteine 3, cysteine 11, cysteine 14, and cysteine 87. Residues glutamine 212, phenylalanine 241, glutamate 262, and asparagine 307 each coordinate S-adenosyl-L-methionine. The active-site Nucleophile is the cysteine 334.

The protein belongs to the class I-like SAM-binding methyltransferase superfamily. RNA M5U methyltransferase family. RlmC subfamily.

It catalyses the reaction uridine(747) in 23S rRNA + S-adenosyl-L-methionine = 5-methyluridine(747) in 23S rRNA + S-adenosyl-L-homocysteine + H(+). Functionally, catalyzes the formation of 5-methyl-uridine at position 747 (m5U747) in 23S rRNA. The sequence is that of 23S rRNA (uracil(747)-C(5))-methyltransferase RlmC from Escherichia coli O127:H6 (strain E2348/69 / EPEC).